A 472-amino-acid chain; its full sequence is Probable glycine dehydrogenase (decarboxylating) subunit 2 (472 aa).

Lysine 268 carries the N6-(pyridoxal phosphate)lysine modification.

This sequence belongs to the GcvP family. C-terminal subunit subfamily. The glycine cleavage system is composed of four proteins: P, T, L and H. In this organism, the P 'protein' is a heterodimer of two subunits. It depends on pyridoxal 5'-phosphate as a cofactor.

The catalysed reaction is N(6)-[(R)-lipoyl]-L-lysyl-[glycine-cleavage complex H protein] + glycine + H(+) = N(6)-[(R)-S(8)-aminomethyldihydrolipoyl]-L-lysyl-[glycine-cleavage complex H protein] + CO2. The glycine cleavage system catalyzes the degradation of glycine. The P protein binds the alpha-amino group of glycine through its pyridoxal phosphate cofactor; CO(2) is released and the remaining methylamine moiety is then transferred to the lipoamide cofactor of the H protein. The sequence is that of Probable glycine dehydrogenase (decarboxylating) subunit 2 from Thermoplasma acidophilum (strain ATCC 25905 / DSM 1728 / JCM 9062 / NBRC 15155 / AMRC-C165).